The following is a 452-amino-acid chain: Pup--protein ligase (452 aa).

Position 9 (glutamate 9) interacts with Mg(2+). Arginine 53 serves as a coordination point for ATP. Mg(2+) is bound at residue tyrosine 55. The active-site Proton acceptor is aspartate 57. Glutamate 63 is a Mg(2+) binding site. 2 residues coordinate ATP: threonine 66 and tryptophan 419.

The protein belongs to the Pup ligase/Pup deamidase family. Pup-conjugating enzyme subfamily. In terms of processing, pupylated at an undetermined lysine residue by the prokaryotic ubiquitin-like protein Pup, which leads to its degradation by the proteasome and thereby constitutes a negative auto-regulation.

It carries out the reaction ATP + [prokaryotic ubiquitin-like protein]-L-glutamate + [protein]-L-lysine = ADP + phosphate + N(6)-([prokaryotic ubiquitin-like protein]-gamma-L-glutamyl)-[protein]-L-lysine.. It functions in the pathway protein degradation; proteasomal Pup-dependent pathway. The protein operates within protein modification; protein pupylation. Functionally, catalyzes the covalent attachment of the prokaryotic ubiquitin-like protein modifier Pup to the proteasomal substrate proteins, thereby targeting them for proteasomal degradation. This tagging system is termed pupylation. The ligation reaction likely involves the side-chain carboxylate of the C-terminal glutamate of Pup and the side-chain amino group of a substrate lysine. In Mycolicibacterium smegmatis (strain ATCC 700084 / mc(2)155) (Mycobacterium smegmatis), this protein is Pup--protein ligase (pafA).